The primary structure comprises 33 residues: Photosystem II reaction center protein Psb30 (33 aa).

A helical membrane pass occupies residues 5–25; it reads VILQLGSILLVVAAGPLVIVL.

This sequence belongs to the Psb30/Ycf12 family. In terms of assembly, PSII is composed of 1 copy each of membrane proteins PsbA, PsbB, PsbC, PsbD, PsbE, PsbF, PsbH, PsbI, PsbJ, PsbK, PsbL, PsbM, PsbT, PsbX, PsbY, PsbZ, Psb30/Ycf12, peripheral proteins of the oxygen-evolving complex and a large number of cofactors. It forms dimeric complexes.

It is found in the plastid. It localises to the chloroplast thylakoid membrane. In terms of biological role, a core subunit of photosystem II (PSII), probably helps stabilize the reaction center. The protein is Photosystem II reaction center protein Psb30 of Oltmannsiellopsis viridis (Marine flagellate).